The following is a 270-amino-acid chain: Phthiotriol/phenolphthiotriol dimycocerosates methyltransferase (270 aa).

Belongs to the methyltransferase superfamily. Phthiotriol/phenolphthiotriol dimycocerosates methyltransferase family.

Functionally, catalyzes the methylation of the lipid moiety of the intermediate compounds phthiotriol and glycosylated phenolphthiotriol dimycoserosates to form phthiocerol dimycocerosates (DIM A) and glycosylated phenolphthiocerol dimycocerosates (PGL). This chain is Phthiotriol/phenolphthiotriol dimycocerosates methyltransferase, found in Mycobacterium leprae (strain TN).